The following is a 303-amino-acid chain: UPF0282 protein MM_2966 (303 aa).

Belongs to the UPF0282 family.

In Methanosarcina mazei (strain ATCC BAA-159 / DSM 3647 / Goe1 / Go1 / JCM 11833 / OCM 88) (Methanosarcina frisia), this protein is UPF0282 protein MM_2966.